The following is a 71-amino-acid chain: ATP synthase subunit c 1 (71 aa).

2 helical membrane passes run 4–24 and 46–66; these read FIGAGLATIGLGGAGIGVGHV and LFVGIAFAEALGIFSFLIALL.

Belongs to the ATPase C chain family. As to quaternary structure, F-type ATPases have 2 components, F(1) - the catalytic core - and F(0) - the membrane proton channel. F(1) has five subunits: alpha(3), beta(3), gamma(1), delta(1), epsilon(1). F(0) has four main subunits: a(1), b(1), b'(1) and c(10-14). The alpha and beta chains form an alternating ring which encloses part of the gamma chain. F(1) is attached to F(0) by a central stalk formed by the gamma and epsilon chains, while a peripheral stalk is formed by the delta, b and b' chains.

The protein resides in the cell inner membrane. F(1)F(0) ATP synthase produces ATP from ADP in the presence of a proton or sodium gradient. F-type ATPases consist of two structural domains, F(1) containing the extramembraneous catalytic core and F(0) containing the membrane proton channel, linked together by a central stalk and a peripheral stalk. During catalysis, ATP synthesis in the catalytic domain of F(1) is coupled via a rotary mechanism of the central stalk subunits to proton translocation. In terms of biological role, key component of the F(0) channel; it plays a direct role in translocation across the membrane. A homomeric c-ring of between 10-14 subunits forms the central stalk rotor element with the F(1) delta and epsilon subunits. This chain is ATP synthase subunit c 1, found in Cereibacter sphaeroides (strain ATCC 17029 / ATH 2.4.9) (Rhodobacter sphaeroides).